Here is a 518-residue protein sequence, read N- to C-terminus: Protein translocase subunit SecD (518 aa).

The next 6 helical transmembrane spans lie at 9 to 29 (IVLS…NFIQ), 356 to 376 (GKKA…LSYG), 377 to 397 (VIGL…LALL), 406 to 426 (LPGI…NVLI), 451 to 473 (AFAT…YIFG), and 486 to 506 (IGII…IDIW).

It belongs to the SecD/SecF family. SecD subfamily. As to quaternary structure, forms a complex with SecF. Part of the essential Sec protein translocation apparatus which comprises SecA, SecYEG and auxiliary proteins SecDF-YajC and YidC.

Its subcellular location is the cell inner membrane. Its function is as follows. Part of the Sec protein translocase complex. Interacts with the SecYEG preprotein conducting channel. SecDF uses the proton motive force (PMF) to complete protein translocation after the ATP-dependent function of SecA. The sequence is that of Protein translocase subunit SecD from Rickettsia typhi (strain ATCC VR-144 / Wilmington).